The following is a 698-amino-acid chain: Elongation factor G (698 aa).

The tr-type G domain occupies 10-285; the sequence is AATRNIGIMA…AVVDFLPSPT (276 aa). GTP is bound by residues 19 to 26, 83 to 87, and 137 to 140; these read AHIDAGKT, DTPGH, and NKMD.

Belongs to the TRAFAC class translation factor GTPase superfamily. Classic translation factor GTPase family. EF-G/EF-2 subfamily.

It localises to the cytoplasm. Its function is as follows. Catalyzes the GTP-dependent ribosomal translocation step during translation elongation. During this step, the ribosome changes from the pre-translocational (PRE) to the post-translocational (POST) state as the newly formed A-site-bound peptidyl-tRNA and P-site-bound deacylated tRNA move to the P and E sites, respectively. Catalyzes the coordinated movement of the two tRNA molecules, the mRNA and conformational changes in the ribosome. In Parafrankia sp. (strain EAN1pec), this protein is Elongation factor G.